The chain runs to 426 residues: Glutamate-1-semialdehyde 2,1-aminomutase (426 aa).

N6-(pyridoxal phosphate)lysine is present on Lys-265.

It belongs to the class-III pyridoxal-phosphate-dependent aminotransferase family. HemL subfamily. As to quaternary structure, homodimer. It depends on pyridoxal 5'-phosphate as a cofactor.

Its subcellular location is the cytoplasm. It catalyses the reaction (S)-4-amino-5-oxopentanoate = 5-aminolevulinate. Its pathway is porphyrin-containing compound metabolism; protoporphyrin-IX biosynthesis; 5-aminolevulinate from L-glutamyl-tRNA(Glu): step 2/2. The protein is Glutamate-1-semialdehyde 2,1-aminomutase of Hahella chejuensis (strain KCTC 2396).